Here is a 382-residue protein sequence, read N- to C-terminus: Alpha-methylacyl-CoA racemase (382 aa).

Residues Arg-36 and 55-58 (LDLK) contribute to the substrate site. Lys-58 carries the post-translational modification N6-acetyllysine. Lys-87 is modified (N6-acetyllysine; alternate). Position 87 is an N6-succinyllysine; alternate (Lys-87). Residue 121–126 (GHDINY) participates in substrate binding. His-122 serves as the catalytic Proton acceptor. Asp-152 functions as the Proton donor in the catalytic mechanism. The residue at position 268 (Lys-268) is an N6-succinyllysine. A Microbody targeting signal motif is present at residues 380–382 (ASL).

Belongs to the CoA-transferase III family. In terms of assembly, monomer.

The protein localises to the peroxisome. It is found in the mitochondrion. It carries out the reaction a (2S)-2-methylacyl-CoA = a (2R)-2-methylacyl-CoA. The enzyme catalyses (25R)-3alpha,7alpha,12alpha-trihydroxy-5beta-cholestan-26-oyl-CoA = (25S)-3alpha,7alpha,12alpha-trihydroxy-5beta-cholestan-26-oyl-CoA. The catalysed reaction is (2R,6)-dimethylheptanoyl-CoA = (2S,6)-dimethylheptanoyl-CoA. It participates in lipid metabolism; bile acid biosynthesis. Its pathway is lipid metabolism; fatty acid metabolism. Catalyzes the interconversion of (R)- and (S)-stereoisomers of alpha-methyl-branched-chain fatty acyl-CoA esters. Acts only on coenzyme A thioesters, not on free fatty acids, and accepts as substrates a wide range of alpha-methylacyl-CoAs, including pristanoyl-CoA, trihydroxycoprostanoyl-CoA (an intermediate in bile acid synthesis), and arylpropionic acids like the anti-inflammatory drug ibuprofen (2-(4-isobutylphenyl)propionic acid) but neither 3-methyl-branched nor linear-chain acyl-CoAs. The polypeptide is Alpha-methylacyl-CoA racemase (AMACR) (Homo sapiens (Human)).